A 199-amino-acid polypeptide reads, in one-letter code: Chaperone protein TorD (199 aa).

This sequence belongs to the TorD/DmsD family. TorD subfamily.

It localises to the cytoplasm. Functionally, involved in the biogenesis of TorA. Acts on TorA before the insertion of the molybdenum cofactor and, as a result, probably favors a conformation of the apoenzyme that is competent for acquiring the cofactor. This is Chaperone protein TorD from Shigella boydii serotype 18 (strain CDC 3083-94 / BS512).